The chain runs to 514 residues: Maturase K (514 aa).

The protein belongs to the intron maturase 2 family. MatK subfamily.

The protein resides in the plastid. Its subcellular location is the chloroplast. In terms of biological role, usually encoded in the trnK tRNA gene intron. Probably assists in splicing its own and other chloroplast group II introns. This chain is Maturase K, found in Dioon spinulosum (Gum palm).